The sequence spans 69 residues: Defensin-like protein 166 (69 aa).

The signal sequence occupies residues M1 to Q15. 4 disulfides stabilise this stretch: C19–C68, C24–C44, C29–C62, and C33–C64.

It belongs to the DEFL family.

It is found in the secreted. The polypeptide is Defensin-like protein 166 (Arabidopsis thaliana (Mouse-ear cress)).